A 260-amino-acid polypeptide reads, in one-letter code: Glutamate racemase (260 aa).

Substrate contacts are provided by residues 14 to 15 (DS) and 46 to 47 (YG). Cys77 serves as the catalytic Proton donor/acceptor. Residue 78-79 (NT) coordinates substrate. Cys188 acts as the Proton donor/acceptor in catalysis. A substrate-binding site is contributed by 189-190 (TH).

It belongs to the aspartate/glutamate racemases family.

The catalysed reaction is L-glutamate = D-glutamate. It functions in the pathway cell wall biogenesis; peptidoglycan biosynthesis. In terms of biological role, provides the (R)-glutamate required for cell wall biosynthesis. This Clostridium perfringens (strain ATCC 13124 / DSM 756 / JCM 1290 / NCIMB 6125 / NCTC 8237 / Type A) protein is Glutamate racemase.